The sequence spans 859 residues: Cadherin-related family member 1 (859 aa).

A signal peptide spans 1–19 (MRRCRWAALALGLLRLCLA). Topologically, residues 20–700 (QANFAPHFFD…LIQTKDNPMK (681 aa)) are extracellular. Cadherin domains lie at 36–135 (NGNM…APRF), 136–246 (IQEP…APVF), 247–353 (VGTP…PPTF), 359–472 (PQNR…VPKF), 473–576 (DSLY…PPQF), and 573–688 (PPQF…SPMA). N-linked (GlcNAc...) asparagine glycosylation is found at Asn-58 and Asn-89. Asn-296 carries N-linked (GlcNAc...) asparagine glycosylation. The chain crosses the membrane as a helical span at residues 701–721 (AVGVLAGTMATVVAITVLIST). The Cytoplasmic segment spans residues 722-859 (ATFWRNKKSN…KKSVHNKAYF (138 aa)). The segment at 770-838 (KEKPPNENCN…PKTMGSPVQS (69 aa)) is disordered. Low complexity predominate over residues 775 to 791 (NENCNNNSPESSLLPRA).

Interacts with PROM1. In terms of processing, undergoes proteolytic cleavage; produces a soluble 95 kDa N-terminal fragment and a 25 kDa cell-associated C-terminal fragment.

The protein localises to the cell membrane. Potential calcium-dependent cell-adhesion protein. May be required for the structural integrity of the outer segment (OS) of photoreceptor cells. This Homo sapiens (Human) protein is Cadherin-related family member 1.